Consider the following 267-residue polypeptide: Outer membrane protein assembly factor BamD (267 aa).

Residues 1-16 form the signal peptide; the sequence is MKKILLTVSLGLALSA. The N-palmitoyl cysteine moiety is linked to residue cysteine 17. The S-diacylglycerol cysteine moiety is linked to residue cysteine 17.

Belongs to the BamD family. Part of the Bam complex.

It is found in the cell outer membrane. Part of the outer membrane protein assembly complex, which is involved in assembly and insertion of beta-barrel proteins into the outer membrane. Required for efficient transformation of Neisseria meningitidis by species-related DNA. The chain is Outer membrane protein assembly factor BamD from Neisseria meningitidis serogroup A / serotype 4A (strain DSM 15465 / Z2491).